Consider the following 566-residue polypeptide: Proline--tRNA ligase (566 aa).

Belongs to the class-II aminoacyl-tRNA synthetase family. ProS type 1 subfamily. Homodimer.

The protein resides in the cytoplasm. The enzyme catalyses tRNA(Pro) + L-proline + ATP = L-prolyl-tRNA(Pro) + AMP + diphosphate. In terms of biological role, catalyzes the attachment of proline to tRNA(Pro) in a two-step reaction: proline is first activated by ATP to form Pro-AMP and then transferred to the acceptor end of tRNA(Pro). As ProRS can inadvertently accommodate and process non-cognate amino acids such as alanine and cysteine, to avoid such errors it has two additional distinct editing activities against alanine. One activity is designated as 'pretransfer' editing and involves the tRNA(Pro)-independent hydrolysis of activated Ala-AMP. The other activity is designated 'posttransfer' editing and involves deacylation of mischarged Ala-tRNA(Pro). The misacylated Cys-tRNA(Pro) is not edited by ProRS. This chain is Proline--tRNA ligase, found in Staphylococcus haemolyticus (strain JCSC1435).